A 426-amino-acid chain; its full sequence is 4-hydroxy-3-methylbut-2-en-1-yl diphosphate synthase (flavodoxin) (426 aa).

4 residues coordinate [4Fe-4S] cluster: C310, C313, C356, and E363.

Belongs to the IspG family. [4Fe-4S] cluster is required as a cofactor.

It carries out the reaction (2E)-4-hydroxy-3-methylbut-2-enyl diphosphate + oxidized [flavodoxin] + H2O + 2 H(+) = 2-C-methyl-D-erythritol 2,4-cyclic diphosphate + reduced [flavodoxin]. It participates in isoprenoid biosynthesis; isopentenyl diphosphate biosynthesis via DXP pathway; isopentenyl diphosphate from 1-deoxy-D-xylulose 5-phosphate: step 5/6. Converts 2C-methyl-D-erythritol 2,4-cyclodiphosphate (ME-2,4cPP) into 1-hydroxy-2-methyl-2-(E)-butenyl 4-diphosphate. The sequence is that of 4-hydroxy-3-methylbut-2-en-1-yl diphosphate synthase (flavodoxin) from Rhodopseudomonas palustris (strain BisA53).